We begin with the raw amino-acid sequence, 841 residues long: uncharacterized protein (841 aa).

Positions 1–31 (MKIERYFKAIARAFIITFLFSLILQDNGVLA) are cleaved as a signal peptide.

The protein resides in the secreted. This is an uncharacterized protein from Schizosaccharomyces pombe (strain 972 / ATCC 24843) (Fission yeast).